A 446-amino-acid chain; its full sequence is 3-phosphoshikimate 1-carboxyvinyltransferase (446 aa).

The segment at 1-20 (MIMAKPLSSRRAAPLAGSAP) is disordered. Lys-25, Ser-26, and Arg-30 together coordinate 3-phosphoshikimate. Residue Lys-25 participates in phosphoenolpyruvate binding. The phosphoenolpyruvate site is built by Gly-98 and Arg-126. The 3-phosphoshikimate site is built by Ser-171, Gln-173, Asp-324, and Lys-351. Gln-173 is a binding site for phosphoenolpyruvate. Catalysis depends on Asp-324, which acts as the Proton acceptor. Residues Arg-355 and Arg-399 each coordinate phosphoenolpyruvate.

The protein belongs to the EPSP synthase family. Monomer.

The protein localises to the cytoplasm. The catalysed reaction is 3-phosphoshikimate + phosphoenolpyruvate = 5-O-(1-carboxyvinyl)-3-phosphoshikimate + phosphate. It participates in metabolic intermediate biosynthesis; chorismate biosynthesis; chorismate from D-erythrose 4-phosphate and phosphoenolpyruvate: step 6/7. Its function is as follows. Catalyzes the transfer of the enolpyruvyl moiety of phosphoenolpyruvate (PEP) to the 5-hydroxyl of shikimate-3-phosphate (S3P) to produce enolpyruvyl shikimate-3-phosphate and inorganic phosphate. The chain is 3-phosphoshikimate 1-carboxyvinyltransferase from Paramagnetospirillum magneticum (strain ATCC 700264 / AMB-1) (Magnetospirillum magneticum).